The chain runs to 58 residues: UPF0391 membrane protein Sbal195_1447 (58 aa).

Helical transmembrane passes span 6 to 26 and 28 to 48; these read LVFL…IAGA and AGIA…SLLV.

Belongs to the UPF0391 family.

Its subcellular location is the cell membrane. The chain is UPF0391 membrane protein Sbal195_1447 from Shewanella baltica (strain OS195).